Consider the following 1331-residue polypeptide: MRLKTKIRKKWLSVLCTVVFLLNILFIANVTILPKVGAATSNDGVVKIDTSTLIGTNHAHCWYRDRLDTALRGIRSWGMNSVRVVLSNGYRWTKIPASEVANIISLSRSLGFKAIILEVHDTTGYGEDGAACSLAQAVEYWKEIKSVLDGNEDFVIINIGNEPYGNNNYQNWVNDTKNAIKALRDAGFKHTIMVDAPNWGQDWSNTMRDNAQSIMEADPLRNLVFSIHMYGVYNTASKVEEYIKSFVDKGLPLVIGEFGHQHTDGDPDEEAIVRYAKQYKIGLFSWSWCGNSSYVGYLDMVNNWDPNNPTPWGQWYKTNAIGTSSTPTPTSTVTPTPTPTPTPTPTVTATPTPTPTPVSTPATSGQIKVLYANKETNSTTNTIRPWLKVVNSGSSSIDLSRVTIRYWYTVDGERAQSAISDWAQIGASNVTFKFVKLSSSVSGADYYLEIGFKSGAGQLQPGKDTGEIQMRFNKDDWSNYNQGNDWSWIQSMTSYGENEKVTAYIDGVLVWGQEPSGATPAPAPTATPTPTPTVTPTPTVTPTPTVTATPTPTPTPTPTPVSTPATGGQIKVLYANKETNSTTNTIRPWLKVVNSGSSSIDLSRVTIRYWYTVDGERAQSAISDWAQIGASNVTFKFVKLSSSVSGADYYLEIGFKSGAGQLQPGKDTGEIQIRFNKSDWSNYNQGNDWSWIQSMTSYGENEKVTAYIDGVLVWGQEPSGTTPSPTSTPTVTVTPTPTPTPTPTPTPTVTPTPTVTPTPTVTATPTPTPTPIPTVTPLPTISPSPSVVEITINTNAGRTQISPYIYGANQDIEGVVHSARRLGGNRLTGYNWENNFSNAGNDWYHSSDDYLCWSMGISGEDAKVPAAVVSKFHEYSLKNNAYSAVTLQMAGYVSKDNYGTVSENETAPSNRWAEVKFKKDAPLSLNPDLNDNFVYMDEFINYLINKYGMASSPTGIKGYILDNEPDLWASTHPRIHPNKVTCKELIEKSVELAKVIKTLDPSAEVFGYASYGFMGYYSLQDAPDWNQVKGEHRWFISWYLEQMKKASDSFGKRLLDVLDLHWYPEARGGNIRVCFDGENDTSKEVVIARMQAPRTLWDPTYKTSVKGQITAGENSWINQWFSDYLPIIPNVKADIEKYYPGTKLAISEFDYGGRNHISGGIALADVLGIFGKYGVNFAARWGDSGSYAAAAYNIYLNYDGKGSKYGNTNVSANTSDVENMPVYASINGQDDSELHIILINRNYDQKLQVKINITSTPKYTKAEIYGFDSNSPEYKKMGNIDNIESNVFTLEVPKFNGVSHSITLDFNVSIKIIQNEVIKFIRNLVFMRALV.

A signal peptide spans 1–41 (MRLKTKIRKKWLSVLCTVVFLLNILFIANVTILPKVGAATS). Residues 42 to 325 (NDGVVKIDTS…YKTNAIGTSS (284 aa)) form a catalytic (mannanase) region. The active-site Proton donor is E162. The active-site Nucleophile is the E257. Disordered regions lie at residues 319-363 (NAIG…TPAT), 515-566 (PSGA…TPAT), and 717-780 (EPSG…PLPT). A compositionally biased stretch (low complexity) spans 323-335 (TSSTPTPTSTVTP). Residues 363-516 (TSGQIKVLYA…GVLVWGQEPS (154 aa)) form the CBM3 1 domain. Pro residues-rich tracts occupy residues 521 to 541 (APAPTATPTPTPTVTPTPTVT) and 551 to 561 (TPTPTPTPTPV). The CBM3 2 domain maps to 566 to 719 (TGGQIKVLYA…GVLVWGQEPS (154 aa)). A compositionally biased stretch (low complexity) spans 721 to 735 (TTPSPTSTPTVTVTP). Composition is skewed to pro residues over residues 736 to 756 (TPTPTPTPTPTPTVTPTPTVT) and 766 to 780 (TPTPTPIPTVTPLPT). A catalytic (endoglucanase) region spans residues 781–1331 (ISPSPSVVEI…RNLVFMRALV (551 aa)).

In the N-terminal section; belongs to the glycosyl hydrolase 5 (cellulase A) family. It in the C-terminal section; belongs to the glycosyl hydrolase 44 (cellulase J) family.

It carries out the reaction Random hydrolysis of (1-&gt;4)-beta-D-mannosidic linkages in mannans, galactomannans and glucomannans.. The enzyme catalyses Endohydrolysis of (1-&gt;4)-beta-D-glucosidic linkages in cellulose, lichenin and cereal beta-D-glucans.. In terms of biological role, degradation of hemicelluloses, the second most abundant polysaccharides in nature. Contains two catalytic domains with mannanase and endoglucanase activities. This chain is Beta-mannanase/endoglucanase A (manA), found in Caldicellulosiruptor saccharolyticus (Caldocellum saccharolyticum).